The following is a 223-amino-acid chain: F420-dependent NADP reductase (223 aa).

NADP(+) contacts are provided by residues Thr-9–Gln-12, Ser-30–Arg-31, Lys-35, Leu-75, and Val-101.

Belongs to the F420-dependent NADP reductase family.

The enzyme catalyses reduced coenzyme F420-(gamma-L-Glu)(n) + NADP(+) = oxidized coenzyme F420-(gamma-L-Glu)(n) + NADPH + 2 H(+). Its function is as follows. Catalyzes the reduction of NADP(+) with F420H(2) via hydride transfer, and the reverse reaction, i.e. the reduction of F420 with NADPH. Probably functions in the regeneration of NADPH required in biosynthetic reactions. In Methanocaldococcus jannaschii (strain ATCC 43067 / DSM 2661 / JAL-1 / JCM 10045 / NBRC 100440) (Methanococcus jannaschii), this protein is F420-dependent NADP reductase (fno).